The following is a 263-amino-acid chain: Coiled-coil domain-containing protein 172 (263 aa).

Residues 13 to 191 (TEHQAEESRR…LKVLKDEETE (179 aa)) are a coiled coil.

It belongs to the CCDC172 family. May interact with TEKT2. As to expression, detected in spermatozoa (at protein level). Predominantly expressed in testis and in spermatozoa from the caput and corpus epididymis.

The protein resides in the cytoplasm. It localises to the cell projection. The protein localises to the cilium. In Rattus norvegicus (Rat), this protein is Coiled-coil domain-containing protein 172 (Ccdc172).